We begin with the raw amino-acid sequence, 397 residues long: Probable peptidoglycan glycosyltransferase FtsW (397 aa).

The Cytoplasmic segment spans residues 1 to 18 (MSALTLTASKNTQTMTLD). Residues 19–39 (LPLLGSALALAAIGLIMVTSA) traverse the membrane as a helical segment. Over 40–58 (SVDFADDANGQALYYMWRH) the chain is Periplasmic. A helical transmembrane segment spans residues 59–79 (LTYLLAGVAVGFVILRLPLEW). Over 80–83 (WHKQ) the chain is Cytoplasmic. The chain crosses the membrane as a helical span at residues 84-104 (SWLLLVVALGFLVAVLIPGIG). The Periplasmic portion of the chain corresponds to 105–112 (RTVNGSTR). The chain crosses the membrane as a helical span at residues 113–133 (WISLGVINIQASEIAKVCLAI). The Cytoplasmic segment spans residues 134–148 (YTASYLVRRLDEVRG). The chain crosses the membrane as a helical span at residues 149–169 (SWWGFAKPLLVLMLVALLLLM). Topologically, residues 170 to 172 (EPD) are periplasmic. Residues 173–193 (FGALVVTMCAVVGMIFLSGVA) traverse the membrane as a helical segment. Topologically, residues 194-196 (LSR) are cytoplasmic. A helical transmembrane segment spans residues 197–217 (FAALLMFCVGSVALLAVSQPY). Residues 218–272 (RLKRLTAYTDPWADQFDSGYQLTQALIAFGRGEWSGVGLGNSVQKLFYLPEAHTD) are Periplasmic-facing. The chain crosses the membrane as a helical span at residues 273-293 (FVFAIIAEELGLLGSLLIIVL). At 294 to 316 (FGVLLWRGMYVSRVAERAGQLFN) the chain is on the cytoplasmic side. The helical transmembrane segment at 317 to 337 (AYAGYGVTLLLGGQALINLGV) threads the bilayer. Residues 338–348 (NTGLLPTKGLT) are Periplasmic-facing. A helical membrane pass occupies residues 349 to 369 (LPLISYGGSSLIISCLCVAIL). Residues 370–397 (LRIGSEAVSGEQTEDESPKVKNRGGAQR) are Cytoplasmic-facing.

Belongs to the SEDS family. FtsW subfamily.

Its subcellular location is the cell inner membrane. The catalysed reaction is [GlcNAc-(1-&gt;4)-Mur2Ac(oyl-L-Ala-gamma-D-Glu-L-Lys-D-Ala-D-Ala)](n)-di-trans,octa-cis-undecaprenyl diphosphate + beta-D-GlcNAc-(1-&gt;4)-Mur2Ac(oyl-L-Ala-gamma-D-Glu-L-Lys-D-Ala-D-Ala)-di-trans,octa-cis-undecaprenyl diphosphate = [GlcNAc-(1-&gt;4)-Mur2Ac(oyl-L-Ala-gamma-D-Glu-L-Lys-D-Ala-D-Ala)](n+1)-di-trans,octa-cis-undecaprenyl diphosphate + di-trans,octa-cis-undecaprenyl diphosphate + H(+). It functions in the pathway cell wall biogenesis; peptidoglycan biosynthesis. Peptidoglycan polymerase that is essential for cell division. The sequence is that of Probable peptidoglycan glycosyltransferase FtsW from Hahella chejuensis (strain KCTC 2396).